The chain runs to 59 residues: Large ribosomal subunit protein uL30 (59 aa).

It belongs to the universal ribosomal protein uL30 family. As to quaternary structure, part of the 50S ribosomal subunit.

This is Large ribosomal subunit protein uL30 from Haemophilus influenzae (strain 86-028NP).